Reading from the N-terminus, the 380-residue chain is Tomoregulin-1 (380 aa).

The N-terminal stretch at 1-39 (MGAAAAEAPLRLPAAPPLAFCCYTSVLLLFAFSLPGSRA) is a signal peptide. At 40-330 (SNQPPGGGGG…VPSRQKLTHV (291 aa)) the chain is on the extracellular side. Kazal-like domains lie at 98–145 (ACQF…PCYS) and 189–237 (VCNI…HCTD). 9 cysteine pairs are disulfide-bonded: Cys-99-Cys-129, Cys-103-Cys-122, Cys-111-Cys-143, Cys-190-Cys-221, Cys-194-Cys-214, Cys-203-Cys-235, Cys-275-Cys-288, Cys-283-Cys-299, and Cys-301-Cys-310. The region spanning 271–311 (NHMPCPENLNGYCIHGKCEFIYSTQKASCRCESGYTGQHCE) is the EGF-like domain. Residues 331–351 (LIAAIIGAVQIAIIVAIVMCI) traverse the membrane as a helical segment. The Cytoplasmic portion of the chain corresponds to 352 to 380 (TRKCPKNNRGRRQKQNLGHFTSDTSSRMV). Residues 359 to 380 (NRGRRQKQNLGHFTSDTSSRMV) form a disordered region. The segment covering 366–380 (QNLGHFTSDTSSRMV) has biased composition (polar residues).

It belongs to the tomoregulin family. As to quaternary structure, may interact with ST14. As to expression, expressed predominantly in brain, and at lower levels in heart, placenta and skeletal muscle. Down-regulated in brain tumors as compared to control brain tissues.

The protein resides in the cell membrane. Neuron-specific restriction factor that prevents herpes simplex virus 1 (HHV-1) infection in the brain by blocking viral entry. Also able to restrict herpes simplex virus 2 (HHV-2) infection, although to a lesser extent. Acts by preventing the association between the viral glycoprotein D (gD) and its cell surface receptor NECTIN1, thereby inhibiting fusion of the virus and the cell membrane. Also able to prevent the association between the viral glycoprotein B (gB) and MYH9/NMMHC-IIA and MYH10/NMMHC-IIB receptors. May be a tumor suppressor in brain cancers. The protein is Tomoregulin-1 of Homo sapiens (Human).